Reading from the N-terminus, the 443-residue chain is 3-phosphoshikimate 1-carboxyvinyltransferase (443 aa).

Positions 1–22 (MSHASRPTPLEARGSTPLTGRV) are disordered. The 3-phosphoshikimate site is built by lysine 28, serine 29, and arginine 33. Lysine 28 is a binding site for phosphoenolpyruvate. The phosphoenolpyruvate site is built by glycine 101 and arginine 129. Serine 174, glutamine 176, aspartate 326, and lysine 353 together coordinate 3-phosphoshikimate. Glutamine 176 serves as a coordination point for phosphoenolpyruvate. Aspartate 326 (proton acceptor) is an active-site residue. Phosphoenolpyruvate is bound by residues arginine 357 and arginine 400.

Belongs to the EPSP synthase family. In terms of assembly, monomer.

It is found in the cytoplasm. It catalyses the reaction 3-phosphoshikimate + phosphoenolpyruvate = 5-O-(1-carboxyvinyl)-3-phosphoshikimate + phosphate. It functions in the pathway metabolic intermediate biosynthesis; chorismate biosynthesis; chorismate from D-erythrose 4-phosphate and phosphoenolpyruvate: step 6/7. Catalyzes the transfer of the enolpyruvyl moiety of phosphoenolpyruvate (PEP) to the 5-hydroxyl of shikimate-3-phosphate (S3P) to produce enolpyruvyl shikimate-3-phosphate and inorganic phosphate. The chain is 3-phosphoshikimate 1-carboxyvinyltransferase from Afipia carboxidovorans (strain ATCC 49405 / DSM 1227 / KCTC 32145 / OM5) (Oligotropha carboxidovorans).